Reading from the N-terminus, the 206-residue chain is Probable thymidylate kinase (206 aa).

10 to 17 (GIDGSGKS) lines the ATP pocket.

The protein belongs to the thymidylate kinase family.

The catalysed reaction is dTMP + ATP = dTDP + ADP. The chain is Probable thymidylate kinase from Methanosarcina acetivorans (strain ATCC 35395 / DSM 2834 / JCM 12185 / C2A).